The sequence spans 388 residues: MAAISSPPLTQKALKVASPDTLHLVTDAPLPTLGQDDSVLIRVVCVAINPVDGKSAEMSPTPGATSGTDFAGIVVALHGDAKSRTETADTIKTGDRVMGFVFGNNPHVLGNGAFAEYVTLPRRFLWRVPDHMSLEAAASLPVGVASVGMALHYLRISMSSLLKAVSRSIAAPSASQPHDGAFDSDANVFILVYGGGTSTGAIAIQILKAAGFHPITCCSSESASRAKRLGAVATFDYQSATCGRDIRDYTNDSLTLAIDCLSESASMAICYEAMGSAGGRYVSLDPFPVRGCVRRSIVPDWICSFTQFGQSIPWAPPYNLDERPDDHRLAEEWYHLAQKLLDAELIEAPTLEIRSGGLLHVPEGVAAVKLGQIKRRKLVYHISEEALP.

An NADP(+)-binding site is contributed by 51–54 (VDGK). Residue 142 to 149 (VGVASVGM) coordinates substrate. Residues 219-222 (SSES), Tyr-237, and 284-285 (LD) each bind NADP(+). 304–308 (SFTQF) serves as a coordination point for substrate. 373-374 (IK) lines the NADP(+) pocket.

Belongs to the zinc-containing alcohol dehydrogenase family. In terms of assembly, monomer.

It participates in secondary metabolite biosynthesis. Functionally, trans-enoyl reductase; part of the gene cluster that mediates the biosynthesis of tenellin-type 2-pyridones, iron-chelating compounds involved in iron stress tolerance, competition with the natural competitor fungus Metarhizium robertsii and insect hosts infection. TenC collaborates with the hybrid PKS-NRPS synthetase tenS to catalyze the assembly of the polyketide-amino acid backbone, since tenS lacks a designated enoylreductase (ER) domain. Upon formation of the polyketide backbone on the thiotemplate of tenS, the triketide is transferred to the NRPS module and linked to tyrosine to produce the pyrrolidine-2-dione intermediates, including pretellinin A, 11-hydropretellenin A, 12-hydropretellenin A, 13-hydropretellenin A, 14-hydropretellenin A, 12-oxopretellenin A and prototellinin D. The pathway begins with the assembly of the polyketide-amino acid backbone by the hybrid PKS-NRPS tenS with the help of the enoyl reductase tenC. These enzymes catalyze the synthesis of the pyrrolidine-2-dione intermediates pretellinin A, 11-hydropretellenin A, 12-hydropretellenin A, 13-hydropretellenin A, 14-hydropretellenin A, 12-oxopretellenin A and prototellinin D. The cytochrome P450 monooxygenase tenA then catalyzes an oxidative ring expansion of pretenellin A and 14-hydropretellenin A to form the 2-pyridone core, leading to pretenellin B and pyridovericin, respectively. The cytochrome P450 monooxygenase tenB is then required for the selective N-hydroxylation of the 2-pyridone nitrogen of yield tellinin and 15-hydroxytellenin (15-HT), respectively. The UDP-glucosyltransferase GT1 and the methyltransferase MT1, located outside the tenS gene cluster, contribute to the stepwise glycosylation and methylation of 15-HT to obtain the glycoside pyridovericin-N-O-(4-O-methyl-beta-D-glucopyranoside) (PMGP). Additional related compounds such as 1-O-methyl-15-HT, (8Z)-1-O-methyl-15-HT, and O-methyltenellin A are also produced but the enzymes involved in their biosynthesis have still to be determined. The protein is Trans-enoyl reductase tenC of Beauveria bassiana (White muscardine disease fungus).